Here is a 171-residue protein sequence, read N- to C-terminus: UPF0398 protein SEQ_1788 (171 aa).

This sequence belongs to the UPF0398 family.

In Streptococcus equi subsp. equi (strain 4047), this protein is UPF0398 protein SEQ_1788.